The following is a 369-amino-acid chain: Bi-functional coumaroyl CoA and feruloyl CoA ortho-hydroxylase Diox1 (369 aa).

The Fe2OG dioxygenase domain occupies 209 to 319; sequence IREPMLVGSR…RISVPLFVNP (111 aa). Tyr225 lines the 2-oxoglutarate pocket. Residues His240, Asp242, and His300 each coordinate Fe cation. The 2-oxoglutarate site is built by Arg310 and Ser312.

Belongs to the iron/ascorbate-dependent oxidoreductase family. It depends on L-ascorbate as a cofactor. Requires Fe(2+) as cofactor.

It carries out the reaction (E)-4-coumaroyl-CoA + 2-oxoglutarate + O2 = (E)-2,4-dihydroxycinnamoyl-CoA + succinate + CO2. It catalyses the reaction (E)-feruloyl-CoA + 2-oxoglutarate + O2 = (E)-6-hydroxyferuloyl-CoA + succinate + CO2. Its pathway is phenylpropanoid metabolism. In terms of biological role, 2-oxoglutarate (OG)- and Fe(II)-dependent dioxygenase (2OGD) involved in scopoletin and umbelliferone biosynthesis. Converts feruloyl CoA into 6'-hydroxyferuloyl CoA, and p-coumaroyl CoA into 2,4-dihydroxycinnamoyl-CoA. This is Bi-functional coumaroyl CoA and feruloyl CoA ortho-hydroxylase Diox1 from Ruta graveolens (Common rue).